We begin with the raw amino-acid sequence, 236 residues long: MHVVVPFAADTPKTRLSEVLSPPERTALARAMLADVLSAITATGHVPTVLSTSPLSLENGCSCDDLPSTTPPGLESASDIPVTVDDRPLTAAVNAQLEAAEEPVAIVMADLALATPAALSTLFASGAADGVAIAPGRGGGTNALVVRHPDFRVDYHGASYLDHREHAAEIGAPLESVDSFRLGTDVDEPADLVEVLIHGRETAADGGESRTATRLRELGFELETTDGRVTVARDRS.

Belongs to the CofC family. In terms of assembly, homodimer.

The catalysed reaction is (2S)-2-phospholactate + GTP + H(+) = (2S)-lactyl-2-diphospho-5'-guanosine + diphosphate. It participates in cofactor biosynthesis; coenzyme F420 biosynthesis. In terms of biological role, guanylyltransferase that catalyzes the activation of (2S)-2-phospholactate (2-PL) as (2S)-lactyl-2-diphospho-5'-guanosine, via the condensation of 2-PL with GTP. It is involved in the biosynthesis of coenzyme F420, a hydride carrier cofactor. The protein is 2-phospho-L-lactate guanylyltransferase of Natrialba magadii (strain ATCC 43099 / DSM 3394 / CCM 3739 / CIP 104546 / IAM 13178 / JCM 8861 / NBRC 102185 / NCIMB 2190 / MS3) (Natronobacterium magadii).